The following is a 367-amino-acid chain: Probable ATP-dependent RNA helicase MJ0669 (367 aa).

Positions methionine 6–methionine 34 match the Q motif motif. The Helicase ATP-binding domain maps to proline 38–isoleucine 206. An ATP-binding site is contributed by alanine 51–threonine 58. The short motif at aspartate 154–aspartate 157 is the DEAD box element. The 155-residue stretch at asparagine 213–glycine 367 folds into the Helicase C-terminal domain.

Belongs to the DEAD box helicase family. As to quaternary structure, homodimer.

The enzyme catalyses ATP + H2O = ADP + phosphate + H(+). This chain is Probable ATP-dependent RNA helicase MJ0669, found in Methanocaldococcus jannaschii (strain ATCC 43067 / DSM 2661 / JAL-1 / JCM 10045 / NBRC 100440) (Methanococcus jannaschii).